Here is a 595-residue protein sequence, read N- to C-terminus: Pyranose dehydrogenase (595 aa).

Positions 1–21 (MARFNARLFSIAILGFQVARS) are cleaved as a signal peptide. N-linked (GlcNAc...) asparagine glycans are attached at residues N95 and N110. Residue H123 is modified to Tele-8alpha-FAD histidine. N195, N337, N367, N502, and N510 each carry an N-linked (GlcNAc...) asparagine glycan. H530 acts as the Proton acceptor in catalysis. N-linked (GlcNAc...) asparagine glycosylation occurs at N541. Residue H574 is part of the active site.

Belongs to the GMC oxidoreductase family. Monomer. The cofactor is FAD. In terms of processing, N-glycosylated.

The protein resides in the secreted. The enzyme catalyses pyranose + acceptor = pyranos-2-ulose + reduced acceptor.. It catalyses the reaction pyranose + acceptor = pyranos-3-ulose + reduced acceptor.. It carries out the reaction pyranose + acceptor = pyranos-2,3-diulose + reduced acceptor.. The catalysed reaction is a pyranoside + acceptor = a pyranosid-3-ulose + reduced acceptor.. The enzyme catalyses a pyranoside + acceptor = a pyranosid-3,4-diulose + reduced acceptor.. In terms of biological role, catalyzes the single-oxidation or sequential double oxidation reaction of carbohydrates primarily at carbon-2 and/or carbon-3 with the concomitant reduction of the flavin. The enzyme exhibits a broad sugar substrate specificity, oxidizing different aldopyranoses to the corresponding C-1, C-2, C-3 or C-1,2, C-2,3 and C-3,4 (di)dehydro sugars with substrate-specific regioselectivity. Accepts only a narrow range of electron acceptors such as substituted benzoquinones and complexed metal ions and reacts extremely slowly with O(2) as acceptor. May play a role in the natural recycling of plant matter by oxidizing all major monosaccharides in lignocellulose and by reducing quinone compounds or reactive radical species generated during lignin depolymerization. The sequence is that of Pyranose dehydrogenase from Agaricus campestris (Field mushroom).